A 262-amino-acid polypeptide reads, in one-letter code: TLC domain-containing protein 4-B (262 aa).

Helical transmembrane passes span 6–26 (PLTVFISVTSLAVFQFLFHVG), 53–73 (TVSSFHALVVGCFCLYILVYD), 90–110 (LNVAVTSGYLISDLLLIIYYW), 122–142 (HLAALYACYYVLGEGMLPYFG), 177–197 (GVLMTISFFIVRIAVIPIYYG), and 218–238 (AWIISSVSLDIMNVMWMIKIA). Positions 44-246 (RQKIEWNSRT…IAKGCYKVLY (203 aa)) constitute a TLC domain.

The protein belongs to the TLCD4 family.

It is found in the membrane. In Xenopus laevis (African clawed frog), this protein is TLC domain-containing protein 4-B (tlcd4-b).